A 228-amino-acid polypeptide reads, in one-letter code: Ribonuclease 3 1 (228 aa).

Positions 1 to 124 (MYKLLMFRDD…VIGAYYLDNN (124 aa)) constitute an RNase III domain. Glu37 contributes to the Mg(2+) binding site. The active site involves Asp41. Mg(2+)-binding residues include Ser110 and Glu113. Glu113 is a catalytic residue. A DRBM domain is found at 153 to 223 (DSKNRFQEWV…AENALANLNK (71 aa)).

The protein belongs to the ribonuclease III family. As to quaternary structure, homodimer. Mg(2+) serves as cofactor.

It is found in the cytoplasm. It catalyses the reaction Endonucleolytic cleavage to 5'-phosphomonoester.. In terms of biological role, digests double-stranded RNA. Involved in the processing of primary rRNA transcript to yield the immediate precursors to the large and small rRNAs (23S and 16S). Processes some mRNAs, and tRNAs when they are encoded in the rRNA operon. Processes pre-crRNA and tracrRNA of type II CRISPR loci if present in the organism. The sequence is that of Ribonuclease 3 1 from Nostoc sp. (strain PCC 7120 / SAG 25.82 / UTEX 2576).